The primary structure comprises 363 residues: Phosphoribosylformylglycinamidine cyclo-ligase (363 aa).

This sequence belongs to the AIR synthase family.

Its subcellular location is the cytoplasm. The catalysed reaction is 2-formamido-N(1)-(5-O-phospho-beta-D-ribosyl)acetamidine + ATP = 5-amino-1-(5-phospho-beta-D-ribosyl)imidazole + ADP + phosphate + H(+). It functions in the pathway purine metabolism; IMP biosynthesis via de novo pathway; 5-amino-1-(5-phospho-D-ribosyl)imidazole from N(2)-formyl-N(1)-(5-phospho-D-ribosyl)glycinamide: step 2/2. The protein is Phosphoribosylformylglycinamidine cyclo-ligase of Parvibaculum lavamentivorans (strain DS-1 / DSM 13023 / NCIMB 13966).